The following is a 256-amino-acid chain: Probable serine/threonine-protein kinase YbdM (256 aa).

The region spanning 25 to 256 is the Protein kinase domain; that stretch reads YKIEECLGMG…DLNRAIQSVT (232 aa). Residues 31-39 and K54 each bind ATP; that span reads LGMGGYGLV. The active-site Proton acceptor is D149.

Belongs to the protein kinase superfamily. Ser/Thr protein kinase family.

The enzyme catalyses L-seryl-[protein] + ATP = O-phospho-L-seryl-[protein] + ADP + H(+). The catalysed reaction is L-threonyl-[protein] + ATP = O-phospho-L-threonyl-[protein] + ADP + H(+). In Bacillus subtilis (strain 168), this protein is Probable serine/threonine-protein kinase YbdM (ybdM).